We begin with the raw amino-acid sequence, 146 residues long: MGFTDKQEALVNSSWESFKQNPGNSVLFYTIILEKAPAAKGMFSFLKDSAGVQDSPKLQSHAEKVFGMVRDSAAQLRATGGVVLGDATLGAIHIQKGVVDPHFAVVKEALLKTIKEVSGDKWSEELNTAWEVAYDALATAIKKAMV.

Residues 2–146 enclose the Globin domain; it reads GFTDKQEALV…LATAIKKAMV (145 aa). Nitrated tyrosine is present on Tyr29. Position 44 (Ser44) interacts with heme b. Residue Ser44 is modified to Phosphoserine. His61 lines the O2 pocket. Residues Lys64, His93, and Lys96 each contribute to the heme b site. Position 134 is a nitrated tyrosine (Tyr134).

The protein belongs to the plant globin family. In terms of assembly, monomer. Nitrated in effective nodules and particularly in hypoxic conditions; this mechanism may play a protective role in the symbiosis by buffering toxic peroxynitrite NO(2)(-). Nitration level decrease during nodule senescence. Post-translationally, phosphorylation at Ser-44 disrupts the molecular environment of its porphyrin ring oxygen binding pocket, thus leading to a reduced oxygen consumption and to the delivery of oxygen O(2) to symbiosomes. In terms of tissue distribution, root nodules.

Its subcellular location is the cytoplasm. The protein localises to the cytosol. It is found in the nucleus. Functionally, leghemoglobin that reversibly binds oxygen O(2) through a pentacoordinated heme iron. In root nodules, facilitates the diffusion of oxygen to the bacteroids while preventing the bacterial nitrogenase from being inactivated by buffering dioxygen, nitric oxide and carbon monoxide, and promoting the formation of reactive oxygen species (ROS, e.g. H(2)O(2)). This role is essential for symbiotic nitrogen fixation (SNF). The sequence is that of Leghemoglobin-3 from Medicago sativa (Alfalfa).